Here is a 435-residue protein sequence, read N- to C-terminus: MAFIDKCKIVLIAGNGGDGIVSWRRETHVPEGGPAGGNGGNGGSIWFVGNHNETSLEFLKYKKIIRAKHGEKGDIKNQHGANAEDVFINVPLGTVVYNPITNEILADINIDQQKYLVAQGGLGGHGNTHFKSPFNKAPNLYELGELGENVEVLLELKTIADIGIIGLPNAGKSTLISTFTNAKPKTANYMFTTLNPVLGTIYRDQNRIIFADIPGLIEGAHTGVGLGHDFLKHIERCFLLIHLISLDPNDNPDIINAYETIVNELKQYKQNLVNKPIVLVANKIDQIGALENLQILKEYLKNNQEIKIISALTNLHVDNMLDDVIKIYFAQKKIYEQRLKEQLPVDQILKWTSDIPKSKELDKTIEIIKVDDHIFEVFGEYLKYWAHRIPLKTQDNLIRFNQKLQSINFNQQLLQAGAVAGDSIKIYDITLEFEE.

One can recognise an Obg domain in the interval 1-159 (MAFIDKCKIV…VEVLLELKTI (159 aa)). The 170-residue stretch at 160-329 (ADIGIIGLPN…MLDDVIKIYF (170 aa)) folds into the OBG-type G domain. GTP is bound by residues 166 to 173 (GLPNAGKS), 191 to 195 (FTTLN), 212 to 215 (DIPG), 282 to 285 (NKID), and 310 to 312 (SAL). The Mg(2+) site is built by S173 and T193. Positions 357-435 (KSKELDKTIE…IYDITLEFEE (79 aa)) constitute an OCT domain.

It belongs to the TRAFAC class OBG-HflX-like GTPase superfamily. OBG GTPase family. In terms of assembly, monomer. Mg(2+) serves as cofactor.

Its subcellular location is the cytoplasm. Its function is as follows. An essential GTPase which binds GTP, GDP and possibly (p)ppGpp with moderate affinity, with high nucleotide exchange rates and a fairly low GTP hydrolysis rate. Plays a role in control of the cell cycle, stress response, ribosome biogenesis and in those bacteria that undergo differentiation, in morphogenesis control. In Ureaplasma parvum serovar 3 (strain ATCC 27815 / 27 / NCTC 11736), this protein is GTPase Obg.